Consider the following 292-residue polypeptide: tRNA dimethylallyltransferase (292 aa).

10-17 (GPTASGKS) contributes to the ATP binding site. Residue 12 to 17 (TASGKS) coordinates substrate. Interaction with substrate tRNA regions lie at residues 35 to 38 (DSMQ) and 159 to 163 (QRIVR).

The protein belongs to the IPP transferase family. In terms of assembly, monomer. Mg(2+) is required as a cofactor.

It catalyses the reaction adenosine(37) in tRNA + dimethylallyl diphosphate = N(6)-dimethylallyladenosine(37) in tRNA + diphosphate. Functionally, catalyzes the transfer of a dimethylallyl group onto the adenine at position 37 in tRNAs that read codons beginning with uridine, leading to the formation of N6-(dimethylallyl)adenosine (i(6)A). This chain is tRNA dimethylallyltransferase, found in Chelativorans sp. (strain BNC1).